A 214-amino-acid chain; its full sequence is pH-sensitive calcium channel (214 aa).

Topologically, residues 1-15 (MQATVHESKQSIMQR) are cytoplasmic. A helical transmembrane segment spans residues 16–37 (ILTVFVFTLLIATVGLFIGQFV). Over 38–44 (PVALMLP) the chain is Extracellular. A helical transmembrane segment spans residues 45 to 59 (LSILEVAMIILAFWM). Over 60–66 (RRRKAVG) the chain is Cytoplasmic. A helical membrane pass occupies residues 67–86 (YAFVYTFAFVSGITLFPIVS). The Extracellular segment spans residues 87–95 (HYASIAGAY). The helical transmembrane segment at 96–117 (VVLEAFGSTFVIFAVLGTIGAK) threads the bilayer. The Cytoplasmic segment spans residues 118-122 (MKKDL). A helical membrane pass occupies residues 123-146 (SFLWSFLLVAVLALAVVGIFNIFS). Residues 147–151 (PLNSA) lie on the Extracellular side of the membrane. A helical transmembrane segment spans residues 152-175 (AMMAYSVIGTIVFSLYILYDLNQI). The Cytoplasmic segment spans residues 176-185 (KHRHITEDLI). Residues 186 to 207 (PVMALSLYLDFINLFINLLRFF) traverse the membrane as a helical segment. Topologically, residues 208 to 214 (GILSSDD) are extracellular.

Belongs to the BI1 family. Monomer.

It localises to the cell membrane. The enzyme catalyses Ca(2+)(in) = Ca(2+)(out). The calcium-release activity is mediated by two factors: pH and transmembrane ion gradient. It was proposed, based on an MD simulation, that the conserved aspartyl dyad (Asp-171-Asp-195) regulates Ca(2+) binding, pH sensing, and the channel pore opening and closing, and that protonation of Asp-171 probably weakens its interaction with Arg-60, facilitating the opening of the channel. Another study using nanodiscs suggests that Asp-171 is not a pH sensor regulating the pore dynamics; instead, it is only involved in the gating of calcium ions. When crystallized in detergents at different pH conditions, the transition between open and closed conformations is regulated by pH. Ca(2+) binding is inhibited by Na(+), K(+), Li(+), Yb(3+) and Lu(3+), but not by Mg(2+) and Mn(2+). Functionally, calcium channel that probably plays a role in the regulation of calcium homeostasis. Uptakes calcium ions and mediates calcium flux in proteoliposomes in a pH-dependent manner. When expressed in E.coli in the presence of high extracellular calcium concentrations, shows calcium-leak activity, increasing intracellular calcium concentration. It can also mediate Ca(2+) flux from the endoplamic reticulum (ER) when expressed in permeabilized mammalian cells. Calcium transport activity is also detected in ER-like lipid vesicles. This chain is pH-sensitive calcium channel, found in Bacillus subtilis (strain 168).